The following is a 649-amino-acid chain: tRNA-guanine(15) transglycosylase (649 aa).

Asp88 acts as the Nucleophile in catalysis. Substrate contacts are provided by Asp123 and Ala194. Zn(2+)-binding residues include Cys280, Cys282, and Cys285. The PUA domain occupies 573–648 (KYRIVIDSSV…VAATLRGGLK (76 aa)).

Belongs to the archaeosine tRNA-ribosyltransferase family. Requires Zn(2+) as cofactor.

It carries out the reaction guanosine(15) in tRNA + 7-cyano-7-deazaguanine = 7-cyano-7-carbaguanosine(15) in tRNA + guanine. It functions in the pathway tRNA modification; archaeosine-tRNA biosynthesis. In terms of biological role, exchanges the guanine residue with 7-cyano-7-deazaguanine (preQ0) at position 15 in the dihydrouridine loop (D-loop) of archaeal tRNAs. This Methanococcus maripaludis (strain DSM 14266 / JCM 13030 / NBRC 101832 / S2 / LL) protein is tRNA-guanine(15) transglycosylase.